The following is a 581-amino-acid chain: Ketol-acid reductoisomerase, chloroplastic (581 aa).

A chloroplast-targeting transit peptide spans 1–50 (MAAVTSSCSTAISASSKTLAKPVAASFAPTNLSFSKLSPQSIRARRSITV). The KARI N-terminal Rossmann domain maps to 92 to 290 (VRGGRDLFHL…ALGSPFTFAT (199 aa)). Residues 113-120 (GVIGWGSQ), 146-151 (RKGSSS), and 185-189 (SDSAQ) contribute to the NADP(+) site. The active site involves His210. 2 consecutive KARI C-terminal knotted domains span residues 291–439 (TLEQ…RPAG) and 440–576 (DLGP…RPEL). Mg(2+) is bound by residues Asp299, Glu303, Glu476, and Glu480. Residue Ser502 participates in substrate binding.

The protein belongs to the ketol-acid reductoisomerase family. As to quaternary structure, homodimer. Requires Mg(2+) as cofactor.

Its subcellular location is the plastid. It localises to the chloroplast. The enzyme catalyses (2R)-2,3-dihydroxy-3-methylbutanoate + NADP(+) = (2S)-2-acetolactate + NADPH + H(+). It carries out the reaction (2R,3R)-2,3-dihydroxy-3-methylpentanoate + NADP(+) = (S)-2-ethyl-2-hydroxy-3-oxobutanoate + NADPH + H(+). It participates in amino-acid biosynthesis; L-isoleucine biosynthesis; L-isoleucine from 2-oxobutanoate: step 2/4. It functions in the pathway amino-acid biosynthesis; L-valine biosynthesis; L-valine from pyruvate: step 2/4. In Pisum sativum (Garden pea), this protein is Ketol-acid reductoisomerase, chloroplastic (PGAAIR).